A 757-amino-acid chain; its full sequence is Exo-alpha-(1-&gt;6)-L-arabinopyranosidase (757 aa).

Residue aspartate 232 is part of the active site.

The protein belongs to the glycosyl hydrolase 3 family. Homotetramer.

With respect to regulation, completely inhibited by Cu(2+) and activated by Co(2+). Its function is as follows. Catalyzes the hydrolysis of a non-reducing terminal alpha-L-arabinopyranosidic linkage in ginsenoside Rb2 (alpha-L-arabinopyranosyl-(1-&gt;6)-alpha-D-glucopyranosyl) to release alpha-D-glucopyranosyl (Rd). It is not able to hydrolyze alpha-L-arabinofuranosyl-(1-&gt;6)-alpha-D-glucopyranosyl (Rc). This chain is Exo-alpha-(1-&gt;6)-L-arabinopyranosidase (apy), found in Bifidobacterium longum.